We begin with the raw amino-acid sequence, 329 residues long: Adenylate isopentenyltransferase 7, mitochondrial (329 aa).

The transit peptide at Met1–Met40 directs the protein to the mitochondrion. An ATP-binding site is contributed by Gly41–Ser48.

The protein belongs to the IPP transferase family. In terms of tissue distribution, expressed in both the vascular stele and the phloem companion cells of the root, in endodermis of the root elongation zone, trichomes on young leaves, and some pollen tubes.

The protein localises to the mitochondrion. It catalyses the reaction dimethylallyl diphosphate + ADP = N(6)-(dimethylallyl)adenosine 5'-diphosphate + diphosphate. The enzyme catalyses dimethylallyl diphosphate + ATP = N(6)-(dimethylallyl)adenosine 5'-triphosphate + diphosphate. Its function is as follows. Involved in cytokinin biosynthesis. Catalyzes the transfer of an isopentenyl group from dimethylallyl diphosphate (DMAPP) to ATP and ADP. This is Adenylate isopentenyltransferase 7, mitochondrial (IPT7) from Arabidopsis thaliana (Mouse-ear cress).